The primary structure comprises 275 residues: Calcium uniporter protein, mitochondrial (275 aa).

The N-terminal 28 residues, 1–28, are a transit peptide targeting the mitochondrion; sequence MNSFVIRNGFGLVRTFNTRLFTTSTQNL. The Mitochondrial matrix portion of the chain corresponds to 29–165; sequence EGELKTILGQ…DRKAHRRATA (137 aa). Positions 125–157 form a coiled coil; the sequence is VGLNKLIESKKSEINSLRQKIQPLEEKKQVIDR. Residues 166–186 form a helical membrane-spanning segment; the sequence is IIWTGLGYCFAQAAILARLTW. Residues 187–192 are Mitochondrial intermembrane-facing; sequence WDLSWD. A Selectivity filter motif is present at residues 191–199; sequence WDIIEPVSY. A helical membrane pass occupies residues 193–213; the sequence is IIEPVSYFLTFGSVLIGYTYF. Ca(2+) is bound at residue Glu195. Residues 214–275 are Mitochondrial matrix-facing; it reads TMTKTEFTYE…ELATKYDHTH (62 aa). Residues 244 to 270 are a coiled coil; that stretch reads PKEDYENLVQAIDKKEKELKELELATK.

The protein belongs to the MCU (TC 1.A.77) family. As to quaternary structure, homooligomer.

It localises to the mitochondrion inner membrane. It catalyses the reaction Ca(2+)(in) = Ca(2+)(out). With respect to regulation, inhibited by ruthenium red or its derivative Ru360. In terms of biological role, mitochondrial inner membrane calcium uniporter that mediates calcium uptake into mitochondria. Constitutes a pore-forming and calcium-conducting subunit. Mitochondrial calcium homeostasis plays key roles in cellular physiology and regulates cell bioenergetics, cytoplasmic calcium signals and activation of cell death pathways. Sufficient to operate as a pore-forming channel without the need of calcium-sensor or auxiliary subunit. The sequence is that of Calcium uniporter protein, mitochondrial from Dictyostelium discoideum (Social amoeba).